A 276-amino-acid chain; its full sequence is Protein TabB (276 aa).

It belongs to the transferase hexapeptide repeat family. Requires pyridoxal 5'-phosphate as cofactor.

The protein is Protein TabB (tabB) of Pseudomonas amygdali pv. tabaci (Pseudomonas syringae pv. tabaci).